We begin with the raw amino-acid sequence, 124 residues long: uncharacterized protein (124 aa).

Disordered stretches follow at residues 1–26 (MRRQ…QPRP) and 100–124 (IPGQ…GLRR). Residues 102-115 (GQQSRNCSLPQTKY) are compositionally biased toward polar residues.

The protein localises to the cytoplasm. It localises to the cytoskeleton. The protein resides in the cilium basal body. This is an uncharacterized protein from Rattus norvegicus (Rat).